A 362-amino-acid polypeptide reads, in one-letter code: Aminomethyltransferase (362 aa).

This sequence belongs to the GcvT family. In terms of assembly, the glycine cleavage system is composed of four proteins: P, T, L and H.

It carries out the reaction N(6)-[(R)-S(8)-aminomethyldihydrolipoyl]-L-lysyl-[protein] + (6S)-5,6,7,8-tetrahydrofolate = N(6)-[(R)-dihydrolipoyl]-L-lysyl-[protein] + (6R)-5,10-methylene-5,6,7,8-tetrahydrofolate + NH4(+). Functionally, the glycine cleavage system catalyzes the degradation of glycine. The protein is Aminomethyltransferase of Listeria monocytogenes serotype 4a (strain HCC23).